The primary structure comprises 195 residues: Penicillin-binding protein activator LpoB (195 aa).

Residues Met1–Gly16 form the signal peptide. Cys17 is lipidated: N-palmitoyl cysteine. Residue Cys17 is the site of S-diacylglycerol cysteine attachment. Residues Ser19–Pro55 are disordered. Composition is skewed to pro residues over residues Pro24 to Pro38 and Pro44 to Pro55.

This sequence belongs to the LpoB family. Interacts with PBP1b.

It is found in the cell outer membrane. Its function is as follows. Regulator of peptidoglycan synthesis that is essential for the function of penicillin-binding protein 1B (PBP1b). The chain is Penicillin-binding protein activator LpoB from Serratia proteamaculans (strain 568).